The sequence spans 957 residues: Receptor-like protein 34 (957 aa).

The N-terminal stretch at 1-31 is a signal peptide; sequence MKGSWVVSTSIIRITLSFTFLFICHFSDVLA. The Extracellular portion of the chain corresponds to 32–910; it reads APTRHLCRPE…EEEDEDLISW (879 aa). N-linked (GlcNAc...) asparagine glycans are attached at residues Asn-78, Asn-101, Asn-114, Asn-143, Asn-167, Asn-191, and Asn-215. 18 LRR repeats span residues 120-143, 144-167, 168-192, 194-216, 217-240, 241-264, 266-287, 288-312, 313-336, 338-360, 361-384, 386-409, 412-434, 435-459, 460-483, 487-510, 511-534, and 535-557; these read LHFL…SIEN, LSHL…SIGN, LSRL…IGNL, HLTF…IGNL, SHLT…IGGL, SNLT…IGNL, QLIV…SFGN, LNQL…LLNL, TGLS…ITSL, NLMA…LFII, PSLT…NISS, SNLQ…ISKL, LQEL…IFSH, LKSL…ILPY, FKTL…SVSS, SQSI…LRTQ, HELG…LWTL, and PNLF…TKPE. N-linked (GlcNAc...) asparagine glycosylation is found at Asn-242 and Asn-263. 2 N-linked (GlcNAc...) asparagine glycosylation sites follow: Asn-311 and Asn-332. Residue Asn-381 is glycosylated (N-linked (GlcNAc...) asparagine). Residue Asn-477 is glycosylated (N-linked (GlcNAc...) asparagine). 6 N-linked (GlcNAc...) asparagine glycosylation sites follow: Asn-541, Asn-544, Asn-569, Asn-593, Asn-608, and Asn-618. One copy of the LRR 19; degenerate repeat lies at 558-580; that stretch reads PSMAYLLGSNNNFTGKIPSFICE. 10 LRR repeats span residues 581–605, 606–630, 632–652, 653–675, 677–698, 699–722, 765–789, 790–813, 815–837, and 839–862; these read LRSL…MENL, KSNL…IFES, RSLD…LRFF, SNLE…WLSS, QKLQ…QALF, PKLR…YFVE, LTIY…IGLL, KELH…IGNL, ALES…IGNL, and LLSY…QFLT. Asn-712 carries N-linked (GlcNAc...) asparagine glycosylation. Residues Asn-796, Asn-812, Asn-836, and Asn-844 are each glycosylated (N-linked (GlcNAc...) asparagine). The helical transmembrane segment at 911–931 threads the bilayer; sequence IAAAIGFGPGIAFGLMFGYIL. The Cytoplasmic portion of the chain corresponds to 932–957; sequence VSYKPEWFMNPFGRNNRRRKRHTTTH.

This sequence belongs to the RLP family.

The protein resides in the cell membrane. The chain is Receptor-like protein 34 from Arabidopsis thaliana (Mouse-ear cress).